The following is a 92-amino-acid chain: Small ribosomal subunit protein uS19c (92 aa).

It belongs to the universal ribosomal protein uS19 family.

The protein resides in the plastid. It is found in the chloroplast. In terms of biological role, protein S19 forms a complex with S13 that binds strongly to the 16S ribosomal RNA. The polypeptide is Small ribosomal subunit protein uS19c (Draba nemorosa (Woodland whitlowgrass)).